Consider the following 365-residue polypeptide: NAC domain-containing protein 43 (365 aa).

Residues 16–180 form the NAC domain; that stretch reads VPPGFRFHPT…GWVVCRIFKK (165 aa). The DNA-binding element occupies 116–186; that stretch reads IGMRKTLVFY…IFKKKNLHKT (71 aa).

As to expression, expressed in various aboveground tissues undergoing thickening of the lignified secondary wall such as anthers, filaments of stamens, the base of carpels, styles, the boundaries between siliques and pedicels, the midrib of leaf veins, and inflorescence stems, specifically in interfascicular fibers (sclerenchyma), cells differentiating into vascular vessels, and xylary fibers (secondary xylem).

The protein localises to the nucleus. Its function is as follows. Transcription activator of genes involved in biosynthesis of secondary walls. Together with NST2 and NST3, required for the secondary cell wall thickening of sclerenchymatous fibers, secondary xylem (tracheary elements), and of the anther endocethium, which is necessary for anther dehiscence. May also regulate the secondary cell wall lignification of other tissues. This Arabidopsis thaliana (Mouse-ear cress) protein is NAC domain-containing protein 43 (NAC043).